The following is a 232-amino-acid chain: Large ribosomal subunit protein uL1 (232 aa).

It belongs to the universal ribosomal protein uL1 family. Part of the 50S ribosomal subunit.

In terms of biological role, binds directly to 23S rRNA. The L1 stalk is quite mobile in the ribosome, and is involved in E site tRNA release. Functionally, protein L1 is also a translational repressor protein, it controls the translation of the L11 operon by binding to its mRNA. The chain is Large ribosomal subunit protein uL1 from Xanthobacter autotrophicus (strain ATCC BAA-1158 / Py2).